Here is a 420-residue protein sequence, read N- to C-terminus: Adenylosuccinate synthetase (420 aa).

GTP-binding positions include 12-18 and 40-42; these read GDEGKGK and GHT. Catalysis depends on D13, which acts as the Proton acceptor. The Mg(2+) site is built by D13 and G40. IMP is bound by residues 13-16, 38-41, T128, R142, Q221, T236, and R299; these read DEGK and NAGH. H41 serves as the catalytic Proton donor. 295 to 301 serves as a coordination point for substrate; the sequence is ATTGRPR. GTP contacts are provided by residues R301, 327-329, and 399-401; these read KAD and SYG.

It belongs to the adenylosuccinate synthetase family. In terms of assembly, homodimer. It depends on Mg(2+) as a cofactor.

Its subcellular location is the cytoplasm. The catalysed reaction is IMP + L-aspartate + GTP = N(6)-(1,2-dicarboxyethyl)-AMP + GDP + phosphate + 2 H(+). The protein operates within purine metabolism; AMP biosynthesis via de novo pathway; AMP from IMP: step 1/2. Functionally, plays an important role in the de novo pathway of purine nucleotide biosynthesis. Catalyzes the first committed step in the biosynthesis of AMP from IMP. The chain is Adenylosuccinate synthetase from Petrotoga mobilis (strain DSM 10674 / SJ95).